The chain runs to 217 residues: Deoxyribose-phosphate aldolase (217 aa).

Residue D90 is the Proton donor/acceptor of the active site. K152 (schiff-base intermediate with acetaldehyde) is an active-site residue. Catalysis depends on K181, which acts as the Proton donor/acceptor.

It belongs to the DeoC/FbaB aldolase family. DeoC type 1 subfamily.

The protein localises to the cytoplasm. It catalyses the reaction 2-deoxy-D-ribose 5-phosphate = D-glyceraldehyde 3-phosphate + acetaldehyde. Its pathway is carbohydrate degradation; 2-deoxy-D-ribose 1-phosphate degradation; D-glyceraldehyde 3-phosphate and acetaldehyde from 2-deoxy-alpha-D-ribose 1-phosphate: step 2/2. Functionally, catalyzes a reversible aldol reaction between acetaldehyde and D-glyceraldehyde 3-phosphate to generate 2-deoxy-D-ribose 5-phosphate. The polypeptide is Deoxyribose-phosphate aldolase (Metamycoplasma hominis (Mycoplasma hominis)).